The following is a 399-amino-acid chain: Elongation factor Tu 1 (399 aa).

The 192-residue stretch at 17–208 (KPHVNVGTIG…LDDYVEVPPR (192 aa)) folds into the tr-type G domain. The interval 26–33 (GHVDHGKT) is G1. 26-33 (GHVDHGKT) contributes to the GTP binding site. Thr33 provides a ligand contact to Mg(2+). Residues 62–66 (GITIA) are G2. Positions 83–86 (DCPG) are G3. Residues 83–87 (DCPGH) and 138–141 (NKAD) each bind GTP. The G4 stretch occupies residues 138–141 (NKAD). Positions 175–177 (SAL) are G5.

Belongs to the TRAFAC class translation factor GTPase superfamily. Classic translation factor GTPase family. EF-Tu/EF-1A subfamily. In terms of assembly, monomer.

It is found in the cytoplasm. It carries out the reaction GTP + H2O = GDP + phosphate + H(+). Functionally, GTP hydrolase that promotes the GTP-dependent binding of aminoacyl-tRNA to the A-site of ribosomes during protein biosynthesis. This Wolbachia sp. subsp. Brugia malayi (strain TRS) protein is Elongation factor Tu 1.